A 210-amino-acid polypeptide reads, in one-letter code: MEWMRSRVGTLGLWVRLLLAVFLLGVYQAYPIPDSSPLLQFGGQVRQRYLYTDDDQDTEAHLEIREDGTVVGAAHRSPESLLELKALKPGVIQILGVKASRFLCQQPDGALYGSPHFDPEACSFRELLLEDGYNVYQSEAHGLPLRLPQKDSPNQDATSWGPVRFLPMPGLLHEPQDQAGFLPPEPPDVGSSDPLSMVEPLQGRSPSYAS.

A signal peptide spans 1-28 (MEWMRSRVGTLGLWVRLLLAVFLLGVYQ). Residues 144-210 (PLRLPQKDSP…LQGRSPSYAS (67 aa)) are disordered.

Belongs to the heparin-binding growth factors family. As to quaternary structure, interacts (via C-terminus) with KLB; this interaction is direct. Interacts with FGFR4. Most abundantly expressed in the liver, also expressed in the thymus at lower levels. Expressed in skeletal muscle (at protein level). Secreted in plasma (at protein level).

It localises to the secreted. Functionally, stimulates glucose uptake in differentiated adipocytes via the induction of glucose transporter SLC2A1/GLUT1 expression (but not SLC2A4/GLUT4 expression). Activity probably requires the presence of KLB. Regulates systemic glucose homeostasis and insulin sensitivity. In Mus musculus (Mouse), this protein is Fibroblast growth factor 21 (Fgf21).